A 444-amino-acid chain; its full sequence is Chitinase-like protein Idgf4 (444 aa).

The signal sequence occupies residues 1–22; the sequence is MKLLLILLGALLAVLTIKRTSA. Residues 27–444 enclose the GH18 domain; that stretch reads NHLICYYDGT…ILRAIKFKFQ (418 aa). C31 and C58 are oxidised to a cystine. N226 is a glycosylation site (N-linked (GlcNAc...) asparagine). A disulfide bond links C345 and C428.

It belongs to the glycosyl hydrolase 18 family. IDGF subfamily. Glycosylated.

The protein resides in the secreted. In terms of biological role, cooperates with insulin-like peptides to stimulate the proliferation, polarization and motility of imaginal disk cells. May act by stabilizing the binding of insulin-like peptides to its receptor through a simultaneous interaction with both molecules to form a multiprotein signaling complex. The polypeptide is Chitinase-like protein Idgf4 (Idgf4) (Glossina morsitans morsitans (Savannah tsetse fly)).